The sequence spans 26 residues: Hemocyanin subunit 3 (26 aa).

This sequence belongs to the tyrosinase family. Hemocyanin subfamily. In terms of tissue distribution, hemolymph.

The protein localises to the secreted. It localises to the extracellular space. Its function is as follows. Hemocyanins are copper-containing oxygen carriers occurring freely dissolved in the hemolymph of many mollusks and arthropods. The polypeptide is Hemocyanin subunit 3 (Homarus americanus (American lobster)).